Consider the following 222-residue polypeptide: 2-C-methyl-D-erythritol 4-phosphate cytidylyltransferase (222 aa).

The protein belongs to the IspD/TarI cytidylyltransferase family. IspD subfamily.

The enzyme catalyses 2-C-methyl-D-erythritol 4-phosphate + CTP + H(+) = 4-CDP-2-C-methyl-D-erythritol + diphosphate. Its pathway is isoprenoid biosynthesis; isopentenyl diphosphate biosynthesis via DXP pathway; isopentenyl diphosphate from 1-deoxy-D-xylulose 5-phosphate: step 2/6. Its function is as follows. Catalyzes the formation of 4-diphosphocytidyl-2-C-methyl-D-erythritol from CTP and 2-C-methyl-D-erythritol 4-phosphate (MEP). The chain is 2-C-methyl-D-erythritol 4-phosphate cytidylyltransferase from Thermotoga neapolitana (strain ATCC 49049 / DSM 4359 / NBRC 107923 / NS-E).